A 506-amino-acid polypeptide reads, in one-letter code: NAD(P)H-quinone oxidoreductase subunit 2 (506 aa).

The next 13 membrane-spanning stretches (helical) occupy residues 14-34 (AIIPEAFILLGIVGTLLVDLA), 42-62 (WAPIICYLSIGSSLFSLALQW), 79-99 (LAIAFRAIIALSTLVSLLISW), 108-128 (PIGEFAAIVLSATLGAMLLCG), 132-152 (LISIFISLETLSVASYLLSGY), 167-187 (LLVGSAAAAVYLYGSSFLYGL), 206-226 (FITSLALVFVLSTVAFKIAAV), 240-260 (PTPVVAFLSVGSKTAGFAFAI), 276-296 (LLFTILAILSMALGNVVALAQ), 302-322 (MLAYSSIGQAGFVMIGIVSGT), 330-350 (VLYLAAYLFMNLGAFSCVILF), 374-394 (LGLSLCLLSLGGLPPMLGFFG), and 409-429 (LLVIIGLVTSVISIYYYISVI).

The protein belongs to the complex I subunit 2 family. As to quaternary structure, NDH-1 can be composed of about 15 different subunits; different subcomplexes with different compositions have been identified which probably have different functions.

Its subcellular location is the cellular thylakoid membrane. The enzyme catalyses a plastoquinone + NADH + (n+1) H(+)(in) = a plastoquinol + NAD(+) + n H(+)(out). It carries out the reaction a plastoquinone + NADPH + (n+1) H(+)(in) = a plastoquinol + NADP(+) + n H(+)(out). Functionally, NDH-1 shuttles electrons from an unknown electron donor, via FMN and iron-sulfur (Fe-S) centers, to quinones in the respiratory and/or the photosynthetic chain. The immediate electron acceptor for the enzyme in this species is believed to be plastoquinone. Couples the redox reaction to proton translocation, and thus conserves the redox energy in a proton gradient. Cyanobacterial NDH-1 also plays a role in inorganic carbon-concentration. The polypeptide is NAD(P)H-quinone oxidoreductase subunit 2 (Prochlorococcus marinus (strain MIT 9312)).